The following is an 85-amino-acid chain: Large ribosomal subunit protein bL27 (85 aa).

Residues 1 to 20 are disordered; it reads MAHKKAGGSTRNGRDSESKR.

Belongs to the bacterial ribosomal protein bL27 family.

The chain is Large ribosomal subunit protein bL27 from Azotobacter vinelandii (strain DJ / ATCC BAA-1303).